The following is an 88-amino-acid chain: MLTKEQKQEIIKKYQLHESDTGSPEVQIALLTERINRLNEHLQIHKKDFHSRRGLLKMVGQRRKLLNYLKEYDINRYRELIEKLGLRK.

This sequence belongs to the universal ribosomal protein uS15 family. Part of the 30S ribosomal subunit. Forms a bridge to the 50S subunit in the 70S ribosome, contacting the 23S rRNA.

Functionally, one of the primary rRNA binding proteins, it binds directly to 16S rRNA where it helps nucleate assembly of the platform of the 30S subunit by binding and bridging several RNA helices of the 16S rRNA. Its function is as follows. Forms an intersubunit bridge (bridge B4) with the 23S rRNA of the 50S subunit in the ribosome. This is Small ribosomal subunit protein uS15 from Caldicellulosiruptor saccharolyticus (strain ATCC 43494 / DSM 8903 / Tp8T 6331).